A 470-amino-acid chain; its full sequence is Argininosuccinate lyase (470 aa).

It belongs to the lyase 1 family. Argininosuccinate lyase subfamily.

It localises to the cytoplasm. It carries out the reaction 2-(N(omega)-L-arginino)succinate = fumarate + L-arginine. It participates in amino-acid biosynthesis; L-arginine biosynthesis; L-arginine from L-ornithine and carbamoyl phosphate: step 3/3. This is Argininosuccinate lyase from Mycobacterium tuberculosis (strain ATCC 25618 / H37Rv).